The sequence spans 60 residues: Large ribosomal subunit protein bL32 (60 aa).

The tract at residues 1-60 (MAVQQNKKSPSKRGMHRSHNALTVPGIAVEPTTGETHLRHHISPNGFYRGRQVLKNKSEA) is disordered. Over residues 9 to 19 (SPSKRGMHRSH) the composition is skewed to basic residues.

Belongs to the bacterial ribosomal protein bL32 family.

The polypeptide is Large ribosomal subunit protein bL32 (Paracidovorax citrulli (strain AAC00-1) (Acidovorax citrulli)).